Consider the following 209-residue polypeptide: Peroxynitrite isomerase 2 (209 aa).

The GXWXGXG signature appears at 56 to 62 (GVWRGEG). The heme b site is built by lysine 172 and histidine 199.

This sequence belongs to the nitrobindin family. As to quaternary structure, homodimer. Requires heme b as cofactor.

The enzyme catalyses peroxynitrite = nitrate. It participates in nitrogen metabolism. Its function is as follows. Heme-binding protein able to scavenge peroxynitrite and to protect free L-tyrosine against peroxynitrite-mediated nitration, by acting as a peroxynitrite isomerase that converts peroxynitrite to nitrate. Therefore, this protein likely plays a role in peroxynitrite sensing and in the detoxification of reactive nitrogen and oxygen species (RNS and ROS, respectively). Is able to bind nitric oxide (NO) in vitro, but may act as a sensor of peroxynitrite levels in vivo. The sequence is that of Peroxynitrite isomerase 2 from Mycolicibacterium vanbaalenii (strain DSM 7251 / JCM 13017 / BCRC 16820 / KCTC 9966 / NRRL B-24157 / PYR-1) (Mycobacterium vanbaalenii).